The primary structure comprises 181 residues: Putative poly [ADP-ribose] polymerase-like 100L (181 aa).

Positions methionine 1–lysine 181 constitute a PARP catalytic domain.

It catalyses the reaction NAD(+) + (ADP-D-ribosyl)n-acceptor = nicotinamide + (ADP-D-ribosyl)n+1-acceptor + H(+).. This chain is Putative poly [ADP-ribose] polymerase-like 100L, found in Invertebrate iridescent virus 6 (IIV-6).